The primary structure comprises 472 residues: 3-isopropylmalate dehydratase large subunit (472 aa).

The disordered stretch occupies residues 61 to 80 (TPDHNVPTTQKERASGVEGI). Cys353, Cys414, and Cys417 together coordinate [4Fe-4S] cluster.

Belongs to the aconitase/IPM isomerase family. LeuC type 1 subfamily. As to quaternary structure, heterodimer of LeuC and LeuD. It depends on [4Fe-4S] cluster as a cofactor.

The catalysed reaction is (2R,3S)-3-isopropylmalate = (2S)-2-isopropylmalate. The protein operates within amino-acid biosynthesis; L-leucine biosynthesis; L-leucine from 3-methyl-2-oxobutanoate: step 2/4. Functionally, catalyzes the isomerization between 2-isopropylmalate and 3-isopropylmalate, via the formation of 2-isopropylmaleate. This is 3-isopropylmalate dehydratase large subunit from Saccharophagus degradans (strain 2-40 / ATCC 43961 / DSM 17024).